We begin with the raw amino-acid sequence, 425 residues long: UPF0597 protein VFMJ11_0655 (425 aa).

This sequence belongs to the UPF0597 family.

This Aliivibrio fischeri (strain MJ11) (Vibrio fischeri) protein is UPF0597 protein VFMJ11_0655.